A 379-amino-acid polypeptide reads, in one-letter code: Ribosomal RNA large subunit methyltransferase G (379 aa).

The protein belongs to the methyltransferase superfamily. RlmG family.

Its subcellular location is the cytoplasm. The catalysed reaction is guanosine(1835) in 23S rRNA + S-adenosyl-L-methionine = N(2)-methylguanosine(1835) in 23S rRNA + S-adenosyl-L-homocysteine + H(+). Functionally, specifically methylates the guanine in position 1835 (m2G1835) of 23S rRNA. In Pectobacterium atrosepticum (strain SCRI 1043 / ATCC BAA-672) (Erwinia carotovora subsp. atroseptica), this protein is Ribosomal RNA large subunit methyltransferase G.